Here is a 416-residue protein sequence, read N- to C-terminus: Coenzyme F420H(2) oxidase (416 aa).

Positions 87, 89, 91, 92, 155, 174, and 239 each coordinate Fe cation. In terms of domain architecture, Flavodoxin-like spans 266–407 (AVIVYDTMHY…NCYNMGKELA (142 aa)). Residues 272–277 (TMHYST), 324–327 (TIYD), and 359–364 (SMGGEG) each bind FMN.

The protein in the N-terminal section; belongs to the zinc metallo-hydrolase group 3 family. Requires FMN as cofactor. Fe cation is required as a cofactor.

It carries out the reaction 2 reduced coenzyme F420-(gamma-L-Glu)(n) + O2 = 2 oxidized coenzyme F420-(gamma-L-Glu)(n) + 2 H2O + 2 H(+). Functionally, catalyzes the oxidation of F420H(2) with O(2). May be involved in O(2) detoxification, reducing the intracellular O(2) concentration to a level allowing growth at the expense of methane formation. The chain is Coenzyme F420H(2) oxidase (fprA) from Methanocaldococcus jannaschii (strain ATCC 43067 / DSM 2661 / JAL-1 / JCM 10045 / NBRC 100440) (Methanococcus jannaschii).